The primary structure comprises 544 residues: Chaperonin GroEL 2 (544 aa).

Residues 29–32, 86–90, glycine 413, 479–481, and aspartate 495 contribute to the ATP site; these read TLGP, DGTTT, and NAA.

It belongs to the chaperonin (HSP60) family. As to quaternary structure, forms a cylinder of 14 subunits composed of two heptameric rings stacked back-to-back. Interacts with the co-chaperonin GroES.

Its subcellular location is the cytoplasm. The enzyme catalyses ATP + H2O + a folded polypeptide = ADP + phosphate + an unfolded polypeptide.. In terms of biological role, together with its co-chaperonin GroES, plays an essential role in assisting protein folding. The GroEL-GroES system forms a nano-cage that allows encapsulation of the non-native substrate proteins and provides a physical environment optimized to promote and accelerate protein folding. The sequence is that of Chaperonin GroEL 2 from Trichodesmium erythraeum (strain IMS101).